Reading from the N-terminus, the 307-residue chain is MAMADQRNDKPGRPAAQRERRGWLSRIAPGVRNFAKRETPENLWVKCPETGEMIYRPDLEAALWVTPSGHHMRIGASQRLAVTFDDGQFEKIDCPQVVEDPHKFPDDRAYPDRLKAARKQTGEQDSIAAAYGHIRGQPAVVMVQDFAFMGGSLGMGAGEAFIAAAKEAVKRQVPLVIFTASGGARMQEGTLSLMQMARTTLALNEVKDAGLPYVVVLTDPTTGGVLASYAMLGDVHLAEPNATIGFSGRRVIEQTIRETLPPGFQKSEFLVERGMIDQVVRRADLPEVLGSVLKTLMMGRERLSPAA.

The segment at 1–21 (MAMADQRNDKPGRPAAQRERR) is disordered. The 265-residue stretch at 43-307 (LWVKCPETGE…MGRERLSPAA (265 aa)) folds into the CoA carboxyltransferase N-terminal domain.

The protein belongs to the AccD/PCCB family. In terms of assembly, acetyl-CoA carboxylase is a heterohexamer composed of biotin carboxyl carrier protein (AccB), biotin carboxylase (AccC) and two subunits each of ACCase subunit alpha (AccA) and ACCase subunit beta (AccD).

The protein resides in the cytoplasm. It carries out the reaction N(6)-carboxybiotinyl-L-lysyl-[protein] + acetyl-CoA = N(6)-biotinyl-L-lysyl-[protein] + malonyl-CoA. It functions in the pathway lipid metabolism; malonyl-CoA biosynthesis; malonyl-CoA from acetyl-CoA: step 1/1. Functionally, component of the acetyl coenzyme A carboxylase (ACC) complex. Biotin carboxylase (BC) catalyzes the carboxylation of biotin on its carrier protein (BCCP) and then the CO(2) group is transferred by the transcarboxylase to acetyl-CoA to form malonyl-CoA. This is Acetyl-coenzyme A carboxylase carboxyl transferase subunit beta from Phenylobacterium zucineum (strain HLK1).